A 3470-amino-acid polypeptide reads, in one-letter code: Dynein axonemal heavy chain 5 (3470 aa).

The interval 1-1938 (MFRIGRRQLW…MIHITDVAFT (1938 aa)) is stem. The disordered stretch occupies residues 899-918 (EKVRHENASPNGDTSGGGEG). AAA regions lie at residues 1939–2161 (YQNE…VLRT), 2221–2440 (TAIS…IQNL), 2547–2800 (VYPP…IWQG), and 2913–3167 (LYNE…FRRS). ATP is bound by residues 1977 to 1984 (GPAGTGKT) and 2259 to 2266 (GPSGSGKT). 2 coiled-coil regions span residues 3207-3241 (LKEASESVAALSQELAVKEKELQVANEKADMVLKE) and 3434-3468 (HALAMQDLQKAQAELDDKQAELDVVQAEYEQAMTE).

Belongs to the dynein heavy chain family. In terms of assembly, interacts with DNAL1. Consists of at least two heavy chains and a number of intermediate and light chains.

It localises to the cytoplasm. The protein localises to the cytoskeleton. Its subcellular location is the cilium axoneme. In terms of biological role, force generating protein of respiratory cilia. Produces force towards the minus ends of microtubules. Dynein has ATPase activity; the force-producing power stroke is thought to occur on release of ADP. Required for structural and functional integrity of the cilia of ependymal cells lining the brain ventricles. The chain is Dynein axonemal heavy chain 5 from Rattus norvegicus (Rat).